The following is a 117-amino-acid chain: Protein SMALL AUXIN UP-REGULATED RNA 54 (117 aa).

It belongs to the ARG7 family. As to expression, expressed in trichomes. Hardly observed in leaves.

The protein resides in the cell membrane. Provide a mechanistic link between auxin and plasma membrane H(+)-ATPases (PM H(+)-ATPases, e.g. AHA1 and AHA2), and triggers PM H(+)-ATPases activity by promoting phosphorylation of their C-terminal autoinhibitory domain as a result of PP2C-D subfamily of type 2C phosphatases inhibition, thus leading to the acidification of the apoplast and the facilitation of solutes and water uptake to drive cell expansion. Triggers plant growth probably by promoting cell elongation. Regulates branch angles and bending. This Arabidopsis thaliana (Mouse-ear cress) protein is Protein SMALL AUXIN UP-REGULATED RNA 54.